Consider the following 418-residue polypeptide: Tyrosine--tRNA ligase (418 aa).

Y39 lines the L-tyrosine pocket. Positions 44-53 match the 'HIGH' region motif; it reads CTADSLHVGS. 2 residues coordinate L-tyrosine: Y176 and Q180. The 'KMSKS' region motif lies at 236 to 240; that stretch reads KMGKT. K239 is a binding site for ATP. One can recognise an S4 RNA-binding domain in the interval 350-416; it reads LPLAEMMRAT…KKRHALIRVL (67 aa).

Belongs to the class-I aminoacyl-tRNA synthetase family. TyrS type 1 subfamily. As to quaternary structure, homodimer.

It is found in the cytoplasm. The catalysed reaction is tRNA(Tyr) + L-tyrosine + ATP = L-tyrosyl-tRNA(Tyr) + AMP + diphosphate + H(+). Functionally, catalyzes the attachment of tyrosine to tRNA(Tyr) in a two-step reaction: tyrosine is first activated by ATP to form Tyr-AMP and then transferred to the acceptor end of tRNA(Tyr). The protein is Tyrosine--tRNA ligase of Rhodospirillum rubrum (strain ATCC 11170 / ATH 1.1.1 / DSM 467 / LMG 4362 / NCIMB 8255 / S1).